The sequence spans 311 residues: Malate dehydrogenase (311 aa).

NAD(+) is bound by residues Gly-7–Gly-13 and Asp-34. Positions 81 and 87 each coordinate substrate. Residues Asn-94 and Ile-117–Asn-119 each bind NAD(+). Residues Asn-119 and Arg-153 each contribute to the substrate site. His-177 serves as the catalytic Proton acceptor. Residue Met-227 participates in NAD(+) binding.

Belongs to the LDH/MDH superfamily. MDH type 1 family. As to quaternary structure, homodimer.

It carries out the reaction (S)-malate + NAD(+) = oxaloacetate + NADH + H(+). Functionally, catalyzes the reversible oxidation of malate to oxaloacetate. The polypeptide is Malate dehydrogenase (Shewanella baltica (strain OS155 / ATCC BAA-1091)).